The following is a 62-amino-acid chain: Large ribosomal subunit protein uL30 (62 aa).

The protein belongs to the universal ribosomal protein uL30 family. In terms of assembly, part of the 50S ribosomal subunit.

The sequence is that of Large ribosomal subunit protein uL30 from Thioalkalivibrio sulfidiphilus (strain HL-EbGR7).